Consider the following 415-residue polypeptide: Isocitrate dehydrogenase [NADP] (415 aa).

NADP(+) is bound by residues 77-79 (TIT) and R84. Residue T79 participates in substrate binding. Substrate-binding positions include 96 to 102 (SPNGTIR), R111, and R134. D254 is a binding site for Mn(2+). K262 contacts NADP(+). D277 serves as a coordination point for Mn(2+). NADP(+) contacts are provided by residues 312–317 (GTVTRH) and N330.

This sequence belongs to the isocitrate and isopropylmalate dehydrogenases family. As to quaternary structure, heterodimer. The cofactor is Mg(2+). Mn(2+) serves as cofactor.

Its subcellular location is the cytoplasm. It carries out the reaction D-threo-isocitrate + NADP(+) = 2-oxoglutarate + CO2 + NADPH. Functionally, may supply 2-oxoglutarate for amino acid biosynthesis and ammonia assimilation via the glutamine synthetase/glutamate synthase (GS/GOGAT) pathway. The chain is Isocitrate dehydrogenase [NADP] from Nicotiana tabacum (Common tobacco).